The chain runs to 140 residues: Nucleoside diphosphate kinase (140 aa).

6 residues coordinate ATP: Lys-11, Phe-59, Arg-87, Thr-93, Arg-104, and Asn-114. His-117 serves as the catalytic Pros-phosphohistidine intermediate.

The protein belongs to the NDK family. Homotetramer. Mg(2+) is required as a cofactor.

The protein resides in the cytoplasm. The enzyme catalyses a 2'-deoxyribonucleoside 5'-diphosphate + ATP = a 2'-deoxyribonucleoside 5'-triphosphate + ADP. It catalyses the reaction a ribonucleoside 5'-diphosphate + ATP = a ribonucleoside 5'-triphosphate + ADP. Its function is as follows. Major role in the synthesis of nucleoside triphosphates other than ATP. The ATP gamma phosphate is transferred to the NDP beta phosphate via a ping-pong mechanism, using a phosphorylated active-site intermediate. The chain is Nucleoside diphosphate kinase from Azorhizobium caulinodans (strain ATCC 43989 / DSM 5975 / JCM 20966 / LMG 6465 / NBRC 14845 / NCIMB 13405 / ORS 571).